A 104-amino-acid chain; its full sequence is Phosphoribosyl-ATP pyrophosphatase (104 aa).

This sequence belongs to the PRA-PH family.

The protein localises to the cytoplasm. The catalysed reaction is 1-(5-phospho-beta-D-ribosyl)-ATP + H2O = 1-(5-phospho-beta-D-ribosyl)-5'-AMP + diphosphate + H(+). It participates in amino-acid biosynthesis; L-histidine biosynthesis; L-histidine from 5-phospho-alpha-D-ribose 1-diphosphate: step 2/9. The chain is Phosphoribosyl-ATP pyrophosphatase from Allorhizobium ampelinum (strain ATCC BAA-846 / DSM 112012 / S4) (Agrobacterium vitis (strain S4)).